Here is a 271-residue protein sequence, read N- to C-terminus: Octanoyltransferase LipM (271 aa).

Positions 31–242 (GHNKPTLRFY…GLAEQFNVEF (212 aa)) constitute a BPL/LPL catalytic domain. The active-site Acyl-thioester intermediate is the Cys-144.

Belongs to the octanoyltransferase LipM family. As to quaternary structure, monomer.

It catalyses the reaction octanoyl-[ACP] + L-lysyl-[protein] = N(6)-octanoyl-L-lysyl-[protein] + holo-[ACP] + H(+). It functions in the pathway protein modification; protein lipoylation via endogenous pathway; protein N(6)-(lipoyl)lysine from octanoyl-[acyl-carrier-protein]. Functionally, catalyzes the transfer of endogenously produced octanoic acid from octanoyl-acyl-carrier-protein onto the lipoyl domain of GcvH, an intermediate carrier during protein lipoylation. In Clostridioides difficile (strain 630) (Peptoclostridium difficile), this protein is Octanoyltransferase LipM.